The sequence spans 341 residues: Platelet-activating factor receptor (341 aa).

Residues 1-16 (MEQNGSFRVDSEFRYT) are Extracellular-facing. An N-linked (GlcNAc...) asparagine glycan is attached at Asn4. The helical transmembrane segment at 17–38 (LFPIVYSVIFVLGVVANGYVLW) threads the bilayer. Residues 39 to 54 (VFATLYPSKKLNEIKI) are Cytoplasmic-facing. The chain crosses the membrane as a helical span at residues 55–74 (FMVNLTVADLLFLMTLPLWI). Topologically, residues 75 to 91 (VYYSNEGDWIVHKFLCN) are extracellular. Cys90 and Cys173 form a disulfide bridge. A helical membrane pass occupies residues 92-113 (LAGCLFFINTYCSVAFLGVITY). The Cytoplasmic portion of the chain corresponds to 114–133 (NRYQAVAYPIKTAQATTRKR). The helical transmembrane segment at 134–155 (GITLSLVIWISIAATASYFLAT) threads the bilayer. The Extracellular portion of the chain corresponds to 156–184 (DSTNVVPKKDGSGNITRCFEHYEPYSVPI). N-linked (GlcNAc...) asparagine glycosylation is present at Asn169. The chain crosses the membrane as a helical span at residues 185-205 (LVVHIFITSCFFLVFFLIFYC). The Cytoplasmic portion of the chain corresponds to 206-233 (NMVIIHTLLTRPVRQQRKPEVKRRALWM). The helical transmembrane segment at 234-254 (VCTVLAVFVICFVPHHVVQLP) threads the bilayer. Over 255–275 (WTLAELGYQTNFHQAINDAHQ) the chain is Extracellular. The chain crosses the membrane as a helical span at residues 276-295 (ITLCLLSTNCVLDPVIYCFL). Residues 296-341 (TKKFRKHLSEKFYSMRSSRKCSRATSDTCTEVMMPANQTPVLPLKN) lie on the Cytoplasmic side of the membrane.

Belongs to the G-protein coupled receptor 1 family. Interacts with ARRB1. Present in almost all organs including spleen, small intestine, kidney, lung, liver and brain.

It is found in the cell membrane. Its function is as follows. Receptor for platelet activating factor, a chemotactic phospholipid mediator that possesses potent inflammatory, smooth-muscle contractile and hypotensive activity. Seems to mediate its action via a G protein that activates a phosphatidylinositol-calcium second messenger system. This chain is Platelet-activating factor receptor (Ptafr), found in Rattus norvegicus (Rat).